A 215-amino-acid chain; its full sequence is Pyridoxine/pyridoxamine 5'-phosphate oxidase (215 aa).

Substrate-binding positions include 9 to 12 (RRDY) and Lys-69. Residues 64 to 69 (RILLLK), 79 to 80 (FT), Lys-86, and Gln-108 each bind FMN. Substrate contacts are provided by Tyr-126, Arg-130, and Ser-134. FMN-binding positions include 143–144 (QS) and Trp-188. 194–196 (RLH) provides a ligand contact to substrate. Arg-198 serves as a coordination point for FMN.

This sequence belongs to the pyridoxamine 5'-phosphate oxidase family. Homodimer. FMN serves as cofactor.

The enzyme catalyses pyridoxamine 5'-phosphate + O2 + H2O = pyridoxal 5'-phosphate + H2O2 + NH4(+). It carries out the reaction pyridoxine 5'-phosphate + O2 = pyridoxal 5'-phosphate + H2O2. It functions in the pathway cofactor metabolism; pyridoxal 5'-phosphate salvage; pyridoxal 5'-phosphate from pyridoxamine 5'-phosphate: step 1/1. The protein operates within cofactor metabolism; pyridoxal 5'-phosphate salvage; pyridoxal 5'-phosphate from pyridoxine 5'-phosphate: step 1/1. Catalyzes the oxidation of either pyridoxine 5'-phosphate (PNP) or pyridoxamine 5'-phosphate (PMP) into pyridoxal 5'-phosphate (PLP). The chain is Pyridoxine/pyridoxamine 5'-phosphate oxidase from Pseudomonas fluorescens (strain Pf0-1).